Consider the following 987-residue polypeptide: UvrABC system protein A (987 aa).

33 to 40 is a binding site for ATP; that stretch reads GLSGSGKS. Residues 255 to 282 form a C4-type zinc finger; sequence CPVCDYSLPELEPRLFSFNAPVGACPSC. ABC transporter domains are found at residues 312-589 and 609-938; these read WDRR…PRSL and PNPK…QFLA. 642–649 serves as a coordination point for ATP; that stretch reads GVSGSGKS. The C4-type zinc-finger motif lies at 741–767; it reads CEACQGDGMIKVEMHFLPDVYVPCDVC. The segment at 948–987 is disordered; the sequence is ETRPAAMANKPDARPPRKVKPEKVAKAAKSATKKTAKKAS. A compositionally biased stretch (basic and acidic residues) spans 958-972; sequence PDARPPRKVKPEKVA. Basic residues predominate over residues 978-987; that stretch reads ATKKTAKKAS.

The protein belongs to the ABC transporter superfamily. UvrA family. As to quaternary structure, forms a heterotetramer with UvrB during the search for lesions.

Its subcellular location is the cytoplasm. Functionally, the UvrABC repair system catalyzes the recognition and processing of DNA lesions. UvrA is an ATPase and a DNA-binding protein. A damage recognition complex composed of 2 UvrA and 2 UvrB subunits scans DNA for abnormalities. When the presence of a lesion has been verified by UvrB, the UvrA molecules dissociate. The chain is UvrABC system protein A from Xanthomonas axonopodis pv. citri (strain 306).